Reading from the N-terminus, the 492-residue chain is 2,3-bisphosphoglycerate-independent phosphoglycerate mutase (492 aa).

Mn(2+) contacts are provided by Asp-11 and Ser-61. The active-site Phosphoserine intermediate is the Ser-61. Residues His-118, 147–148 (RD), Arg-178, Arg-184, 248–251 (RNDR), and Lys-320 each bind substrate. Residues Asp-386, His-390, Asp-427, His-428, and His-445 each contribute to the Mn(2+) site.

It belongs to the BPG-independent phosphoglycerate mutase family. Monomer. Requires Mn(2+) as cofactor.

It catalyses the reaction (2R)-2-phosphoglycerate = (2R)-3-phosphoglycerate. It participates in carbohydrate degradation; glycolysis; pyruvate from D-glyceraldehyde 3-phosphate: step 3/5. Catalyzes the interconversion of 2-phosphoglycerate and 3-phosphoglycerate. The chain is 2,3-bisphosphoglycerate-independent phosphoglycerate mutase from Campylobacter jejuni subsp. doylei (strain ATCC BAA-1458 / RM4099 / 269.97).